Consider the following 814-residue polypeptide: Outer membrane usher protein SefC (814 aa).

The signal sequence occupies residues 1 to 30; that stretch reads MKKTTITLFVLTSVFHSGNVFSRQYNFDYG. A disulfide bridge connects residues Cys792 and Cys813.

This sequence belongs to the fimbrial export usher family.

It localises to the cell outer membrane. Functionally, involved in the export and assembly of the SefA fimbrial subunit. The sequence is that of Outer membrane usher protein SefC (sefC) from Salmonella enteritidis.